Reading from the N-terminus, the 114-residue chain is UPF0342 protein LCA_0622 (114 aa).

It belongs to the UPF0342 family.

This chain is UPF0342 protein LCA_0622, found in Latilactobacillus sakei subsp. sakei (strain 23K) (Lactobacillus sakei subsp. sakei).